We begin with the raw amino-acid sequence, 332 residues long: Putative D-threonate 4-phosphate dehydrogenase (332 aa).

Residues His-138 and Thr-139 each coordinate substrate. A divalent metal cation is bound by residues His-168, His-211, and His-266. Substrate-binding residues include Lys-274 and Arg-292.

The protein belongs to the PdxA family. PdxA2 subfamily. In terms of assembly, homodimer. It depends on a divalent metal cation as a cofactor.

It carries out the reaction 4-O-phospho-D-threonate + NAD(+) = dihydroxyacetone phosphate + CO2 + NADH. Catalyzes the NAD-dependent oxidation and subsequent decarboxylation of D-threonate 4-phosphate to produce dihydroxyacetone phosphate (DHAP). In Fusobacterium nucleatum subsp. nucleatum (strain ATCC 25586 / DSM 15643 / BCRC 10681 / CIP 101130 / JCM 8532 / KCTC 2640 / LMG 13131 / VPI 4355), this protein is Putative D-threonate 4-phosphate dehydrogenase.